A 4471-amino-acid polypeptide reads, in one-letter code: Dynein axonemal heavy chain 10 (4471 aa).

A stem region spans residues 1–1793 (MVPEEVEVEI…NIRQCTGTFG (1793 aa)). The disordered stretch occupies residues 46–65 (TESLGQPLNREDEEMDKEIS). Coiled-coil stretches lie at residues 203 to 223 (NVQK…GEIK), 602 to 622 (QEVK…EDRK), 1071 to 1106 (KLLN…EDLK), and 1217 to 1245 (VELL…KLFD). Asparagine 1074 carries N-linked (GlcNAc...) asparagine glycosylation. One copy of the TPR 1 repeat lies at 1221–1254 (GVYERELARHEKSRQELANAEKLFDLPITMYPEL). 4 AAA regions span residues 1794 to 2015 (YGYE…VLVM), 2075 to 2294 (DAVE…VIVE), 2417 to 2665 (IHAP…VFNG), and 2765 to 3014 (EYNE…LRRS). The short motif at 1832-1839 (GPAGTGKT) is the GPAGTGKT motif element. 1832–1839 (GPAGTGKT) lines the ATP pocket. The short motif at 1882–1888 (CFDEFNR) is the CFDEFNR motif element. Residues 2113 to 2120 (GPTRGGKS) and 2455 to 2462 (GESGTSKT) contribute to the ATP site. TPR repeat units follow at residues 2736–2769 (MALH…YNES) and 2771–2797 (TKMN…MDRG). Positions 2747 to 2770 (EDIQDYEAAKALFQEILEEYNESN) form a coiled coil. 2803–2810 (GVGGSGKQ) is an ATP binding site. Positions 3029 to 3313 (YSKLLDEKTQ…QKLQEEAEIM (285 aa)) are stalk. Coiled-coil stretches lie at residues 3045–3131 (KRLD…LAEV), 3257–3327 (KREK…ISGL), and 3567–3638 (ERRE…EKTA). The AAA 5 stretch occupies residues 3399-3629 (LTDDVEISRW…TKSKATEVSE (231 aa)). One copy of the TPR 4 repeat lies at 3802–3837 (WQEWYDLDSLEQFPVPLGYDNNITPFQKLLILRCFR). Residues 3845–4062 (VTDYVTVTMG…FQVCMEILNT (218 aa)) are AAA 6. A TPR 5 repeat occupies 4074-4108 (RIPWGSLKYLIGEVMYGGRAIDSFDRRILTIYMDE). Residues 4235–4260 (LLQELERFNKLVVRMTKSLAELQRAL) are a coiled coil.

It belongs to the dynein heavy chain family. Consists of at least two heavy chains and a number of intermediate and light chains. In terms of tissue distribution, expressed primarily in trachea and testis, 2 tissues containing axonemal structures. Also expressed in brain but not in adult heart.

It is found in the cytoplasm. The protein resides in the cytoskeleton. It localises to the cilium axoneme. Functionally, force generating protein of respiratory cilia. Produces force towards the minus ends of microtubules. Dynein has ATPase activity; the force-producing power stroke is thought to occur on release of ADP. Involved in sperm motility; implicated in sperm flagellar assembly. Probable inner arm dynein heavy chain. The protein is Dynein axonemal heavy chain 10 (DNAH10) of Homo sapiens (Human).